A 443-amino-acid polypeptide reads, in one-letter code: Phosphoglucosamine mutase (443 aa).

Serine 102 serves as the catalytic Phosphoserine intermediate. Residues serine 102, aspartate 241, aspartate 243, and aspartate 245 each contribute to the Mg(2+) site. The residue at position 102 (serine 102) is a Phosphoserine.

Belongs to the phosphohexose mutase family. Requires Mg(2+) as cofactor. In terms of processing, activated by phosphorylation.

The catalysed reaction is alpha-D-glucosamine 1-phosphate = D-glucosamine 6-phosphate. Catalyzes the conversion of glucosamine-6-phosphate to glucosamine-1-phosphate. In Polaromonas naphthalenivorans (strain CJ2), this protein is Phosphoglucosamine mutase.